The sequence spans 211 residues: Protein-L-isoaspartate O-methyltransferase (211 aa).

Serine 60 is an active-site residue.

This sequence belongs to the methyltransferase superfamily. L-isoaspartyl/D-aspartyl protein methyltransferase family.

The protein localises to the cytoplasm. The catalysed reaction is [protein]-L-isoaspartate + S-adenosyl-L-methionine = [protein]-L-isoaspartate alpha-methyl ester + S-adenosyl-L-homocysteine. Functionally, catalyzes the methyl esterification of L-isoaspartyl residues in peptides and proteins that result from spontaneous decomposition of normal L-aspartyl and L-asparaginyl residues. It plays a role in the repair and/or degradation of damaged proteins. The sequence is that of Protein-L-isoaspartate O-methyltransferase from Pseudomonas savastanoi pv. phaseolicola (strain 1448A / Race 6) (Pseudomonas syringae pv. phaseolicola (strain 1448A / Race 6)).